Reading from the N-terminus, the 628-residue chain is DNA primase (628 aa).

The segment at 40 to 64 (CPFHEERSPSFSVAEDKQIFHCFGC) adopts a CHC2-type zinc-finger fold. Residues 269–351 (NTVLLFEGFM…DLSIVSIPEK (83 aa)) enclose the Toprim domain. 3 residues coordinate Mg(2+): glutamate 275, aspartate 319, and aspartate 321.

It belongs to the DnaG primase family. Monomer. Interacts with DnaB. It depends on Zn(2+) as a cofactor. Requires Mg(2+) as cofactor.

The catalysed reaction is ssDNA + n NTP = ssDNA/pppN(pN)n-1 hybrid + (n-1) diphosphate.. In terms of biological role, RNA polymerase that catalyzes the synthesis of short RNA molecules used as primers for DNA polymerase during DNA replication. The chain is DNA primase from Enterococcus faecalis (strain ATCC 700802 / V583).